The sequence spans 158 residues: Transcriptional repressor NrdR (158 aa).

Residues 3–34 (CPYCGYPDSKVIDSRPTDDNTSIRRRRECLKC) fold into a zinc finger. An ATP-cone domain is found at 49–139 (ILVIKKDNRR…VYRQFKDINT (91 aa)).

The protein belongs to the NrdR family. The cofactor is Zn(2+).

Its function is as follows. Negatively regulates transcription of bacterial ribonucleotide reductase nrd genes and operons by binding to NrdR-boxes. The protein is Transcriptional repressor NrdR of Thermoanaerobacter sp. (strain X514).